The chain runs to 202 residues: uncharacterized protein (202 aa).

The protein belongs to the dienelactone hydrolase family.

This is an uncharacterized protein from Bacillus subtilis (strain 168).